A 387-amino-acid polypeptide reads, in one-letter code: Probable peptidoglycan glycosyltransferase FtsW (387 aa).

The next 9 helical transmembrane spans lie at 20 to 40, 61 to 81, 86 to 106, 149 to 169, 172 to 192, 194 to 214, 284 to 304, 322 to 342, and 349 to 369; these read LYLL…VGSA, LFLL…LAFW, PVML…GIGV, TIRG…LLLL, DFGA…LGGA, LWHF…LAWY, LMGS…VLLI, GLGI…MGVL, and LPLM…VALI.

The protein belongs to the SEDS family. FtsW subfamily.

It is found in the cell inner membrane. It carries out the reaction [GlcNAc-(1-&gt;4)-Mur2Ac(oyl-L-Ala-gamma-D-Glu-L-Lys-D-Ala-D-Ala)](n)-di-trans,octa-cis-undecaprenyl diphosphate + beta-D-GlcNAc-(1-&gt;4)-Mur2Ac(oyl-L-Ala-gamma-D-Glu-L-Lys-D-Ala-D-Ala)-di-trans,octa-cis-undecaprenyl diphosphate = [GlcNAc-(1-&gt;4)-Mur2Ac(oyl-L-Ala-gamma-D-Glu-L-Lys-D-Ala-D-Ala)](n+1)-di-trans,octa-cis-undecaprenyl diphosphate + di-trans,octa-cis-undecaprenyl diphosphate + H(+). It participates in cell wall biogenesis; peptidoglycan biosynthesis. Functionally, peptidoglycan polymerase that is essential for cell division. The chain is Probable peptidoglycan glycosyltransferase FtsW from Nitrosococcus halophilus (strain Nc4).